Here is a 214-residue protein sequence, read N- to C-terminus: MNQIFANPLSLPGTAQERVSRAVDSLRQGQGVIVVDDEDRENEGDLIFAAETLTAEQMSRMIRDGSGIVCLILTDPDLDRLALPPMVAHNTSRNGTGFTVSIEAREGVTTGVSAADRVTTIRAAIDPASTADDLARPGHVFPLRAHADGLSARRGHTEATIALMRLAGLRPAGVLCEVMNPDGTMARLPTLIGYGQAHGLPIVSIEDLVAVGAR.

Residues arginine 40–glutamate 41, aspartate 45, arginine 153–threonine 157, and glutamate 177 each bind D-ribulose 5-phosphate. Residue glutamate 41 coordinates Mg(2+). Histidine 156 lines the Mg(2+) pocket.

Belongs to the DHBP synthase family. As to quaternary structure, homodimer. Mg(2+) is required as a cofactor. Mn(2+) serves as cofactor.

It carries out the reaction D-ribulose 5-phosphate = (2S)-2-hydroxy-3-oxobutyl phosphate + formate + H(+). It functions in the pathway cofactor biosynthesis; riboflavin biosynthesis; 2-hydroxy-3-oxobutyl phosphate from D-ribulose 5-phosphate: step 1/1. Its function is as follows. Catalyzes the conversion of D-ribulose 5-phosphate to formate and 3,4-dihydroxy-2-butanone 4-phosphate. This Rhodospirillum rubrum (strain ATCC 11170 / ATH 1.1.1 / DSM 467 / LMG 4362 / NCIMB 8255 / S1) protein is 3,4-dihydroxy-2-butanone 4-phosphate synthase.